The primary structure comprises 175 residues: MLCPICQDTNSRVLESRSAESGKSIRRRRECMNCQHRFTTYERIEFLTITIIKRDGKKESFDKSKLLRGIIRSCEKTGIEVSQLEAFVNQIEVELQGKCQREITSAEIGEIVLSKLSGISEVAYIRFASVYRKFQGIRDFVDTLNHLQNQKENLEFTATVPQNSEISLQQDVINV.

A zinc finger spans residues 3–34 (CPICQDTNSRVLESRSAESGKSIRRRRECMNC). One can recognise an ATP-cone domain in the interval 49–139 (ITIIKRDGKK…VYRKFQGIRD (91 aa)).

The protein belongs to the NrdR family. It depends on Zn(2+) as a cofactor.

Its function is as follows. Negatively regulates transcription of bacterial ribonucleotide reductase nrd genes and operons by binding to NrdR-boxes. This Trichodesmium erythraeum (strain IMS101) protein is Transcriptional repressor NrdR.